Reading from the N-terminus, the 217-residue chain is Deoxyribose-phosphate aldolase (217 aa).

Aspartate 90 serves as the catalytic Proton donor/acceptor. Lysine 152 serves as the catalytic Schiff-base intermediate with acetaldehyde. Catalysis depends on lysine 181, which acts as the Proton donor/acceptor.

Belongs to the DeoC/FbaB aldolase family. DeoC type 1 subfamily.

Its subcellular location is the cytoplasm. The enzyme catalyses 2-deoxy-D-ribose 5-phosphate = D-glyceraldehyde 3-phosphate + acetaldehyde. It functions in the pathway carbohydrate degradation; 2-deoxy-D-ribose 1-phosphate degradation; D-glyceraldehyde 3-phosphate and acetaldehyde from 2-deoxy-alpha-D-ribose 1-phosphate: step 2/2. In terms of biological role, catalyzes a reversible aldol reaction between acetaldehyde and D-glyceraldehyde 3-phosphate to generate 2-deoxy-D-ribose 5-phosphate. This chain is Deoxyribose-phosphate aldolase, found in Metamycoplasma hominis (Mycoplasma hominis).